We begin with the raw amino-acid sequence, 635 residues long: Probable serine/threonine-protein kinase DDB_G0270146 (635 aa).

The 253-residue stretch at 77 to 329 (VISDIAIGKG…AKELLSHPWI (253 aa)) folds into the Protein kinase domain. Residues 83 to 91 (IGKGAFATV) and lysine 106 each bind ATP. Aspartate 199 functions as the Proton acceptor in the catalytic mechanism. Residues 360-392 (SLLSNSSGGDDSVTDSDLSISNQSSRSSSFLLD) are compositionally biased toward low complexity. The tract at residues 360 to 405 (SLLSNSSGGDDSVTDSDLSISNQSSRSSSFLLDDGGGGGGSKNHTV) is disordered. Coiled coils occupy residues 417–456 (IEFN…KYRE) and 536–585 (KKAL…KDSS). The span at 540 to 582 (EAQKRREKEQEKLKEQEKLKEKKKEKDIKKEKDKKDKKDKQLK) shows a compositional bias: basic and acidic residues. The interval 540 to 635 (EAQKRREKEQ…GRSSSKIFNE (96 aa)) is disordered. The segment covering 583 to 598 (DSSSSTTTTNSTPSTP) has biased composition (low complexity). Over residues 626–635 (GRSSSKIFNE) the composition is skewed to polar residues.

This sequence belongs to the protein kinase superfamily. STE Ser/Thr protein kinase family. Mg(2+) is required as a cofactor.

It carries out the reaction L-seryl-[protein] + ATP = O-phospho-L-seryl-[protein] + ADP + H(+). It catalyses the reaction L-threonyl-[protein] + ATP = O-phospho-L-threonyl-[protein] + ADP + H(+). The protein is Probable serine/threonine-protein kinase DDB_G0270146 of Dictyostelium discoideum (Social amoeba).